Consider the following 273-residue polypeptide: Large ribosomal subunit protein uL2cz/uL2cy (273 aa).

2 disordered regions span residues 1–24 (MAIH…QAKS) and 224–254 (NPVD…PALG).

It belongs to the universal ribosomal protein uL2 family. In terms of assembly, part of the 50S ribosomal subunit.

Its subcellular location is the plastid. The protein resides in the chloroplast. The polypeptide is Large ribosomal subunit protein uL2cz/uL2cy (rpl2-A) (Nymphaea alba (White water-lily)).